The following is a 163-amino-acid chain: Ribonuclease P protein component 4 (163 aa).

Zn(2+) is bound by residues C66, C69, C96, and C99. The tract at residues 110 to 163 (GPRGGAPISPPAAEYGSGGRDSGEREDKGPQGPPRQGGRDNRQGGGHQGGPKGD) is disordered. The segment covering 152–163 (QGGGHQGGPKGD) has biased composition (gly residues).

The protein belongs to the eukaryotic/archaeal RNase P protein component 4 family. As to quaternary structure, consists of a catalytic RNA component and at least 4-5 protein subunits. Zn(2+) is required as a cofactor.

It is found in the cytoplasm. It catalyses the reaction Endonucleolytic cleavage of RNA, removing 5'-extranucleotides from tRNA precursor.. In terms of biological role, part of ribonuclease P, a protein complex that generates mature tRNA molecules by cleaving their 5'-ends. This Aeropyrum pernix (strain ATCC 700893 / DSM 11879 / JCM 9820 / NBRC 100138 / K1) protein is Ribonuclease P protein component 4.